We begin with the raw amino-acid sequence, 544 residues long: Phosphomannomutase (544 aa).

Ser145 acts as the Phosphoserine intermediate in catalysis. Residues Ser145, Asp297, Asp299, and Asp301 each coordinate Mg(2+).

This sequence belongs to the phosphohexose mutase family. Requires Mg(2+) as cofactor.

The catalysed reaction is alpha-D-mannose 1-phosphate = D-mannose 6-phosphate. The protein is Phosphomannomutase (manB) of Mycoplasmoides pirum (Mycoplasma pirum).